A 334-amino-acid chain; its full sequence is Nucleoid-associated protein PFL_1060 (334 aa).

This sequence belongs to the YejK family.

Its subcellular location is the cytoplasm. It localises to the nucleoid. This chain is Nucleoid-associated protein PFL_1060, found in Pseudomonas fluorescens (strain ATCC BAA-477 / NRRL B-23932 / Pf-5).